Here is a 315-residue protein sequence, read N- to C-terminus: Ribosomal RNA small subunit methyltransferase H (315 aa).

Residues 35–37 (GGH), D55, F80, D102, and Q109 each bind S-adenosyl-L-methionine.

This sequence belongs to the methyltransferase superfamily. RsmH family.

It localises to the cytoplasm. It catalyses the reaction cytidine(1402) in 16S rRNA + S-adenosyl-L-methionine = N(4)-methylcytidine(1402) in 16S rRNA + S-adenosyl-L-homocysteine + H(+). In terms of biological role, specifically methylates the N4 position of cytidine in position 1402 (C1402) of 16S rRNA. The protein is Ribosomal RNA small subunit methyltransferase H of Shewanella halifaxensis (strain HAW-EB4).